The chain runs to 627 residues: Protein fem-1 homolog B (627 aa).

4 ANK repeats span residues 45–74 (QRSTPLIIAARNGHAKVVRLLLEHYRVQTQ), 87–116 (DGATALWCAAGAGHFEVVKLLVSHGANVNH), 120–149 (TNSTPLRAACFDGRLDIVKYLVENNANISI), and 153–182 (YDNTCLMIAAYKGHTDVVRYLLEQRADPNA). Residues His185, Cys186, and His218 each coordinate Zn(2+). ANK repeat units lie at residues 186 to 215 (CGATALHFAAEAGHIDIVKELIKWRAAIVV) and 218 to 248 (HGMTPLKVAAESCKADVVELLLSHADCDRRS). The TPR repeat unit spans residues 344 to 377 (SHPIIYRGAVYADNMEFEQCIKLWLHALHLRQKG). ANK repeat units lie at residues 483 to 527 (EGFT…EVNA) and 531 to 568 (EGNSALHIIVQYNRPISDFLTLHSIIISLVEAGAHTDM).

This sequence belongs to the fem-1 family. Component of a CRL2 E3 ubiquitin-protein ligase complex, also named ECS (Elongin BC-CUL2/5-SOCS-box protein) complex, composed of CUL2, Elongin BC (ELOB and ELOC), RBX1 and substrate-specific adapter FEM1B. Homooligomer. Interacts with PPM1F and PHTF1. Interacts with the death domain of FAS/TNFRSF6 and TNFRSF1A. Interacts with CHEK1. Interacts with NKX3-1. As to expression, widely expressed. Highly expressed in testis. Weakly expressed in other tissues.

It localises to the cytoplasm. The protein resides in the nucleus. It functions in the pathway protein modification; protein ubiquitination. Its activity is regulated as follows. Activity of the CRL2(FEM1B) complex toward FNIP1 is inhibited by BEX family proteins (BEX1, BEX2, BEX3, BEX4 and/or BEX5) in absence of reductive stress. Mechanistically, BEX proteins act as pseudosubstrate inhibitors that associate with FEM1B via zinc in absence of reductive stress, thereby preventing association between FEM1B and FNIP1. Its function is as follows. Substrate-recognition component of a Cul2-RING (CRL2) E3 ubiquitin-protein ligase complex of the DesCEND (destruction via C-end degrons) pathway, which recognizes a C-degron located at the extreme C terminus of target proteins, leading to their ubiquitination and degradation. The C-degron recognized by the DesCEND pathway is usually a motif of less than ten residues and can be present in full-length proteins, truncated proteins or proteolytically cleaved forms. The CRL2(FEM1B) complex specifically recognizes proteins ending with -Gly-Leu-Asp-Arg, such as CDK5R1, leading to their ubiquitination and degradation. Also acts as a regulator of the reductive stress response by mediating ubiquitination of reduced FNIP1: in response to reductive stress, the CRL2(FEM1B) complex specifically recognizes a conserved Cys degron in FNIP1 when this degron is reduced, leading to FNIP1 degradation and subsequent activation of mitochondria to recalibrate reactive oxygen species (ROS). Mechanistically, recognizes and binds reduced FNIP1 through two interface zinc ions, which act as a molecular glue that recruit reduced FNIP1 to FEM1B. Promotes ubiquitination of GLI1, suppressing GLI1 transcriptional activator activity. Promotes ubiquitination and degradation of ANKRD37. Promotes ubiquitination and degradation of SLBP. Involved in apoptosis by acting as a death receptor-associated protein that mediates apoptosis. Also involved in glucose homeostasis in pancreatic islet. May also act as an adapter/mediator in replication stress-induced signaling that leads to the activation of CHEK1. The sequence is that of Protein fem-1 homolog B from Homo sapiens (Human).